We begin with the raw amino-acid sequence, 374 residues long: N5-carboxyaminoimidazole ribonucleotide synthase (374 aa).

ATP-binding positions include R108, K148, 153–159 (GYDGKGQ), 183–186 (EKYL), E191, H214, and 266–267 (NE). The region spanning 112-296 (KETLKSAGTK…QFDTHILAVT (185 aa)) is the ATP-grasp domain.

This sequence belongs to the PurK/PurT family. In terms of assembly, homodimer.

The catalysed reaction is 5-amino-1-(5-phospho-beta-D-ribosyl)imidazole + hydrogencarbonate + ATP = 5-carboxyamino-1-(5-phospho-D-ribosyl)imidazole + ADP + phosphate + 2 H(+). The protein operates within purine metabolism; IMP biosynthesis via de novo pathway; 5-amino-1-(5-phospho-D-ribosyl)imidazole-4-carboxylate from 5-amino-1-(5-phospho-D-ribosyl)imidazole (N5-CAIR route): step 1/2. Its function is as follows. Catalyzes the ATP-dependent conversion of 5-aminoimidazole ribonucleotide (AIR) and HCO(3)(-) to N5-carboxyaminoimidazole ribonucleotide (N5-CAIR). This Staphylococcus aureus (strain Mu50 / ATCC 700699) protein is N5-carboxyaminoimidazole ribonucleotide synthase.